Consider the following 189-residue polypeptide: Putative manganese efflux pump MntP (189 aa).

The next 6 membrane-spanning stretches (helical) occupy residues 6–26 (IFGI…AAGV), 39–59 (LAWH…YAGL), 71–91 (WIAF…SFDA), 106–126 (LVLL…SLSV), 131–151 (VWMP…GGLM), and 169–189 (VGAG…GVFY).

This sequence belongs to the MntP (TC 9.B.29) family.

The protein resides in the cell inner membrane. Its function is as follows. Probably functions as a manganese efflux pump. The polypeptide is Putative manganese efflux pump MntP (Desulfosudis oleivorans (strain DSM 6200 / JCM 39069 / Hxd3) (Desulfococcus oleovorans)).